The primary structure comprises 499 residues: Putative alpha-galactosidase 8 (499 aa).

Residues Asn154 and Asn191 are each glycosylated (N-linked (GlcNAc...) asparagine). Asp238 serves as the catalytic Nucleophile. A glycan (N-linked (GlcNAc...) asparagine) is linked at Asn256. Asp303 (proton donor) is an active-site residue.

The protein belongs to the glycosyl hydrolase 27 family.

The protein resides in the secreted. It carries out the reaction Hydrolysis of terminal, non-reducing alpha-D-galactose residues in alpha-D-galactosides, including galactose oligosaccharides, galactomannans and galactolipids.. Putative alpha-galactosidase involved in the degradation of simple oligosaccharides like melibiose, raffinose and stachyose, and of polymeric galacto(gluco)mannans. This is Putative alpha-galactosidase 8 (agl8) from Emericella nidulans (strain FGSC A4 / ATCC 38163 / CBS 112.46 / NRRL 194 / M139) (Aspergillus nidulans).